The following is a 369-amino-acid chain: O-methyltransferase 12 (369 aa).

S-adenosyl-L-methionine is bound by residues glycine 181, aspartate 204, 229–231 (GDF), aspartate 230, phenylalanine 231, and lysine 244. The active-site Proton acceptor is the histidine 248.

This sequence belongs to the class I-like SAM-binding methyltransferase superfamily. Cation-independent O-methyltransferase family. COMT subfamily.

It catalyses the reaction resorcinol + S-adenosyl-L-methionine = 3-methoxyphenol + S-adenosyl-L-homocysteine + H(+). Functionally, S-adenosyl-L-methionine dependent O-methyltransferase that may be involved in modifying resorcinol ring to synthesize a variant of 4-methyl-5-pentylbenzene-1,3-diol. The chain is O-methyltransferase 12 (omt12) from Dictyostelium discoideum (Social amoeba).